A 130-amino-acid chain; its full sequence is Protein ApaG (130 aa).

In terms of domain architecture, ApaG spans 3–127; it reads KAETRGIMVT…FSLDSPHLRR (125 aa).

In Methylorubrum extorquens (strain CM4 / NCIMB 13688) (Methylobacterium extorquens), this protein is Protein ApaG.